The sequence spans 723 residues: BBSome complex assembly protein BBS10 (723 aa).

It belongs to the TCP-1 chaperonin family. Component of a complex composed at least of MKKS, BBS10, BBS12, TCP1, CCT2, CCT3, CCT4, CCT5 and CCT8.

It localises to the cell projection. The protein localises to the cilium. Probable molecular chaperone that assists the folding of proteins upon ATP hydrolysis. Plays a role in the assembly of BBSome, a complex involved in ciliogenesis regulating transports vesicles to the cilia. Involved in adipogenic differentiation. The polypeptide is BBSome complex assembly protein BBS10 (BBS10) (Homo sapiens (Human)).